The sequence spans 249 residues: Large ribosomal subunit protein uL4 (249 aa).

This sequence belongs to the universal ribosomal protein uL4 family. As to quaternary structure, part of the 50S ribosomal subunit.

One of the primary rRNA binding proteins, this protein initially binds near the 5'-end of the 23S rRNA. It is important during the early stages of 50S assembly. It makes multiple contacts with different domains of the 23S rRNA in the assembled 50S subunit and ribosome. Its function is as follows. Forms part of the polypeptide exit tunnel. This Methanoculleus marisnigri (strain ATCC 35101 / DSM 1498 / JR1) protein is Large ribosomal subunit protein uL4.